We begin with the raw amino-acid sequence, 415 residues long: Homoserine O-acetyltransferase (415 aa).

Positions 47-369 (NAVLVCHGLT…HGHDAFLVEP (323 aa)) constitute an AB hydrolase-1 domain. Catalysis depends on Ser-155, which acts as the Nucleophile. Position 226 (Arg-226) interacts with substrate. Catalysis depends on residues Asp-329 and His-362. Residue Asp-363 participates in substrate binding. The tract at residues 383-415 (GVAGRAVTDTAPDGGEPDEDEDFAPVHSSLFSR) is disordered.

It belongs to the AB hydrolase superfamily. MetX family. As to quaternary structure, homodimer.

It localises to the cytoplasm. The enzyme catalyses L-homoserine + acetyl-CoA = O-acetyl-L-homoserine + CoA. Its pathway is amino-acid biosynthesis; L-methionine biosynthesis via de novo pathway; O-acetyl-L-homoserine from L-homoserine: step 1/1. Functionally, transfers an acetyl group from acetyl-CoA to L-homoserine, forming acetyl-L-homoserine. The chain is Homoserine O-acetyltransferase from Haloferax volcanii (strain ATCC 29605 / DSM 3757 / JCM 8879 / NBRC 14742 / NCIMB 2012 / VKM B-1768 / DS2) (Halobacterium volcanii).